We begin with the raw amino-acid sequence, 285 residues long: 2-dehydro-3-deoxyphosphooctonate aldolase (285 aa).

This sequence belongs to the KdsA family.

The protein localises to the cytoplasm. It catalyses the reaction D-arabinose 5-phosphate + phosphoenolpyruvate + H2O = 3-deoxy-alpha-D-manno-2-octulosonate-8-phosphate + phosphate. The protein operates within carbohydrate biosynthesis; 3-deoxy-D-manno-octulosonate biosynthesis; 3-deoxy-D-manno-octulosonate from D-ribulose 5-phosphate: step 2/3. It participates in bacterial outer membrane biogenesis; lipopolysaccharide biosynthesis. This Acidovorax ebreus (strain TPSY) (Diaphorobacter sp. (strain TPSY)) protein is 2-dehydro-3-deoxyphosphooctonate aldolase.